Here is a 265-residue protein sequence, read N- to C-terminus: Polyglutamine-binding protein 1 (265 aa).

Residues 46 to 80 form the WW domain; sequence EGLPPSWYKVFDPSCGLPYYWNADTDLVSWLSPHD. Position 94 is a phosphoserine (Ser94). Positions 94–265 are disordered; that stretch reads SSNADAEEKL…AEASRTKQQD (172 aa). Over residues 99–175 the composition is skewed to basic and acidic residues; that stretch reads AEEKLDRSHD…DKADREEGKE (77 aa). 15 tandem repeats follow at residues 104–110, 111–117, 118–124, 125–131, 132–138, 139–140, 141–142, 143–144, 150–151, 152–153, 154–155, 156–157, 158–159, 160–161, and 162–163. Residues 104 to 138 are 5 X 7 AA approximate tandem repeats of D-R-[SG]-H-D-K-S; that stretch reads DRSHDKSDRGHDKSDRSHEKPDRGHDKSDRGHDKS. The segment at 139-144 is 3 X 2 AA tandem repeats of [DE]-R; it reads DRDRER. Residues 150–163 are 7 X 2 AA tandem repeats of [DE]-R; sequence DRERERDRERDRDR. Residues 245–255 are important for interaction with TXNL4A; the sequence is YPSPGAVLRAN. Ser247 bears the Phosphoserine mark.

In terms of assembly, interacts with POU3F2/Brn-2, ATXN1, TXNL4A, HTT and AR. Interaction with ATXN1 correlates positively with the length of the polyglutamine tract. Interacts with RNA polymerase II large subunit in a phosphorylation-dependent manner. Forms a ternary complex with ATXN1 mutant and phosphorylated RNA polymerase II. Interacts (via C-terminus) with TXNL4A and CD2BP2. Interacts (via WW domain) with ATN1 and SF3B1, and may interact with additional splice factors. Interacts (via WW domain) with WBP11; Leading to reduce interaction between PQBP1 and TXNL4A. Interacts with CAPRIN1. Interacts with DDX1. Interacts with SFPQ. Interacts with KHSRP.

It is found in the nucleus. Its subcellular location is the nucleus speckle. The protein localises to the cytoplasmic granule. Functionally, intrinsically disordered protein that acts as a scaffold, and which is involved in different processes, such as pre-mRNA splicing, transcription regulation, innate immunity and neuron development. Interacts with splicing-related factors via the intrinsically disordered region and regulates alternative splicing of target pre-mRNA species. May suppress the ability of POU3F2 to transactivate the DRD1 gene in a POU3F2 dependent manner. Can activate transcription directly or via association with the transcription machinery. May be involved in ATXN1 mutant-induced cell death. The interaction with ATXN1 mutant reduces levels of phosphorylated RNA polymerase II large subunit. Involved in the assembly of cytoplasmic stress granule, possibly by participating in the transport of neuronal RNA granules. Also acts as an innate immune sensor of infection by retroviruses, by detecting the presence of reverse-transcribed DNA in the cytosol. Directly binds retroviral reverse-transcribed DNA in the cytosol and interacts with CGAS, leading to activate the cGAS-STING signaling pathway, triggering type-I interferon production. The polypeptide is Polyglutamine-binding protein 1 (PQBP1) (Pongo pygmaeus (Bornean orangutan)).